The following is a 201-amino-acid chain: Potassium-transporting ATPase KdpC subunit (201 aa).

A helical membrane pass occupies residues 17 to 37; the sequence is LLTGLAYPLAMTGLAGILFPV.

The protein belongs to the KdpC family. In terms of assembly, the system is composed of three essential subunits: KdpA, KdpB and KdpC.

The protein resides in the cell inner membrane. Its function is as follows. Part of the high-affinity ATP-driven potassium transport (or Kdp) system, which catalyzes the hydrolysis of ATP coupled with the electrogenic transport of potassium into the cytoplasm. This subunit acts as a catalytic chaperone that increases the ATP-binding affinity of the ATP-hydrolyzing subunit KdpB by the formation of a transient KdpB/KdpC/ATP ternary complex. The protein is Potassium-transporting ATPase KdpC subunit of Methylobacterium nodulans (strain LMG 21967 / CNCM I-2342 / ORS 2060).